The sequence spans 361 residues: Chorismate synthase (361 aa).

NADP(+) contacts are provided by R48 and R54. FMN contacts are provided by residues 125 to 127 (RSS), 238 to 239 (NA), G278, 293 to 297 (KPTSS), and R319.

Belongs to the chorismate synthase family. As to quaternary structure, homotetramer. The cofactor is FMNH2.

It catalyses the reaction 5-O-(1-carboxyvinyl)-3-phosphoshikimate = chorismate + phosphate. The protein operates within metabolic intermediate biosynthesis; chorismate biosynthesis; chorismate from D-erythrose 4-phosphate and phosphoenolpyruvate: step 7/7. Functionally, catalyzes the anti-1,4-elimination of the C-3 phosphate and the C-6 proR hydrogen from 5-enolpyruvylshikimate-3-phosphate (EPSP) to yield chorismate, which is the branch point compound that serves as the starting substrate for the three terminal pathways of aromatic amino acid biosynthesis. This reaction introduces a second double bond into the aromatic ring system. The chain is Chorismate synthase from Escherichia coli (strain SE11).